The sequence spans 500 residues: Glycerol kinase (500 aa).

ADP is bound at residue Thr-15. Positions 15, 16, and 17 each coordinate ATP. Thr-15 contacts sn-glycerol 3-phosphate. Arg-19 is an ADP binding site. Residues Arg-85, Glu-86, Tyr-137, and Asp-245 each coordinate sn-glycerol 3-phosphate. 5 residues coordinate glycerol: Arg-85, Glu-86, Tyr-137, Asp-245, and Gln-246. ADP is bound by residues Thr-267 and Gly-310. ATP is bound by residues Thr-267, Gly-310, Gln-314, and Gly-411. ADP-binding residues include Gly-411 and Asn-415.

This sequence belongs to the FGGY kinase family.

It carries out the reaction glycerol + ATP = sn-glycerol 3-phosphate + ADP + H(+). It participates in polyol metabolism; glycerol degradation via glycerol kinase pathway; sn-glycerol 3-phosphate from glycerol: step 1/1. Its activity is regulated as follows. Inhibited by fructose 1,6-bisphosphate (FBP). Its function is as follows. Key enzyme in the regulation of glycerol uptake and metabolism. Catalyzes the phosphorylation of glycerol to yield sn-glycerol 3-phosphate. The chain is Glycerol kinase from Aeromonas hydrophila subsp. hydrophila (strain ATCC 7966 / DSM 30187 / BCRC 13018 / CCUG 14551 / JCM 1027 / KCTC 2358 / NCIMB 9240 / NCTC 8049).